The chain runs to 207 residues: MPVVRSKICGITRVEDALIAAKAGADAIGLVFYGKSPRAVSLQRAREIVAALPPFVTTVGLFVNASRCEINEILDAVPLDMLQFHGDESPAQCEGFHRPWYKALRVGGGEDIAAQVALYANASGVLLDTFVAGVPGGTGECFDWSLIPPNLSKPLILAGGLTADNVEQAIAQVRPYAVDISGGVEASKGIKDAVKVETFVRRVRSVM.

This sequence belongs to the TrpF family.

It catalyses the reaction N-(5-phospho-beta-D-ribosyl)anthranilate = 1-(2-carboxyphenylamino)-1-deoxy-D-ribulose 5-phosphate. It participates in amino-acid biosynthesis; L-tryptophan biosynthesis; L-tryptophan from chorismate: step 3/5. In Stutzerimonas stutzeri (strain A1501) (Pseudomonas stutzeri), this protein is N-(5'-phosphoribosyl)anthranilate isomerase.